The primary structure comprises 1270 residues: Myosin-1 (1270 aa).

Residues 1 to 40 (MGHSRRPAGGEKKSRGFGRSKAAADVGDGRQAGKPQVKKA) are disordered. In terms of domain architecture, Myosin motor spans 50-729 (IGVSDLTLLS…TLFALETMRD (680 aa)). Position 143–150 (143–150 (GESGAGKT)) interacts with ATP. S371 is modified (phosphoserine). The segment at 418–500 (SIGILDIYGF…PGVFAALNDA (83 aa)) is actin-binding. 2 consecutive IQ domains span residues 733 to 753 (HNMA…RIEC) and 754 to 779 (AIRI…QGHQ). The TH1 domain maps to 787 to 980 (RRRMSLLGSR…TIHTSAGEPP (194 aa)). Disordered regions lie at residues 960 to 1102 (GASN…VLYD) and 1144 to 1270 (PEAY…DDEW). Residues 963–974 (NVDSYKSSTIHT) are compositionally biased toward polar residues. Over residues 1023-1058 (ARQPMPQPTPQPAAVQPPPAPRPAVSPAAQPRPVPQ) the composition is skewed to pro residues. Residues 1059-1078 (PVAAVAAAQHTRNASSSSTR) are compositionally biased toward low complexity. Residues 1079–1088 (APPPPPPATP) show a composition bias toward pro residues. Positions 1092 to 1153 (QRKPMAKVLY…PEAYLEEQVA (62 aa)) constitute an SH3 domain. Over residues 1157–1167 (KPAPPPPPPAA) the composition is skewed to pro residues. 2 stretches are compositionally biased toward low complexity: residues 1168–1186 (PRAS…VAAK) and 1238–1252 (NSAS…LAEA).

The protein belongs to the TRAFAC class myosin-kinesin ATPase superfamily. Myosin family. Phosphorylation of the TEDS site (Ser-371) is required for the polarization of the actin cytoskeleton. Phosphorylation probably activates the myosin-I ATPase activity.

Its subcellular location is the cytoplasm. The protein localises to the cytoskeleton. It localises to the actin patch. In terms of biological role, type-I myosin implicated in the organization of the actin cytoskeleton. Required for proper actin cytoskeleton polarization. At the cell cortex, assembles in patch-like structures together with proteins from the actin-polymerizing machinery and promotes actin assembly. Functions as actin nucleation-promoting factor (NPF) for the Arp2/3 complex. Plays an important role in polarized growth, spore germination, hyphal morphogenesis, and septal wall formation. The protein is Myosin-1 (myoA) of Aspergillus niger (strain ATCC MYA-4892 / CBS 513.88 / FGSC A1513).